A 1116-amino-acid chain; its full sequence is Surface layer protein (1116 aa).

A signal peptide spans 1 to 53; it reads MQDSGFKKKDRSTNIPQEQFVYTRGGEHKVMKKVVNSVLASALAITVAPMAFA. SLH domains follow at residues 54–117, 118–181, and 182–231; these read AEDT…KLAQ, FNTT…RGVW, and PNSM…YGTD.

It is found in the secreted. The protein localises to the cell wall. It localises to the S-layer. This Brevibacillus choshinensis protein is Surface layer protein.